The sequence spans 417 residues: Probable pectate lyase 20 (417 aa).

The N-terminal stretch at 1-25 (MAVTQILVVFASALLLSMFFTGVDS) is a signal peptide. N-linked (GlcNAc...) asparagine glycosylation is found at Asn-29 and Asn-53. Residues Asp-215, Asp-239, and Asp-243 each contribute to the Ca(2+) site. The active site involves Arg-295.

The protein belongs to the polysaccharide lyase 1 family. Ca(2+) is required as a cofactor.

It carries out the reaction Eliminative cleavage of (1-&gt;4)-alpha-D-galacturonan to give oligosaccharides with 4-deoxy-alpha-D-galact-4-enuronosyl groups at their non-reducing ends.. It participates in glycan metabolism; pectin degradation; 2-dehydro-3-deoxy-D-gluconate from pectin: step 2/5. This Arabidopsis thaliana (Mouse-ear cress) protein is Probable pectate lyase 20.